A 290-amino-acid chain; its full sequence is Arylamine N-acetyltransferase 2 (290 aa).

Cys-68 functions as the Acyl-thioester intermediate in the catalytic mechanism. CoA is bound by residues Ser-103 and Gly-104. 106–107 (IH) provides a ligand contact to substrate. Residues His-107 and Asp-122 contribute to the active site. Tyr-208 contacts CoA.

It belongs to the arylamine N-acetyltransferase family.

The protein localises to the cytoplasm. The enzyme catalyses an arylamine + acetyl-CoA = an N-acetylarylamine + CoA. The catalysed reaction is an N-hydroxyarylamine + acetyl-CoA = an N-acetoxyarylamine + CoA. Catalyzes the N- or O-acetylation of various arylamine and heterocyclic amine substrates. Participates in the detoxification of a plethora of hydrazine and arylamine drugs. The protein is Arylamine N-acetyltransferase 2 (Nat2) of Rattus norvegicus (Rat).